Reading from the N-terminus, the 327-residue chain is Gibberellin 2-beta-dioxygenase 3 (327 aa).

The 106-residue stretch at 173 to 278 (GSDQVFRVNH…RVSFIYFGGP (106 aa)) folds into the Fe2OG dioxygenase domain. Residue tyrosine 183 participates in 2-oxoglutarate binding. Residues histidine 202, aspartate 204, and histidine 259 each coordinate Fe cation. Residues arginine 269 and serine 271 each contribute to the 2-oxoglutarate site.

Belongs to the iron/ascorbate-dependent oxidoreductase family. GA2OX subfamily. L-ascorbate is required as a cofactor. Requires Fe(2+) as cofactor. As to expression, expressed in roots, shoot apex, leaf blades, leaf sheaths, stems and flowers.

It carries out the reaction gibberellin A1 + 2-oxoglutarate + O2 = gibberellin A8 + succinate + CO2. Functionally, catalyzes the 2-beta-hydroxylation of several biologically active gibberellins, leading to the homeostatic regulation of their endogenous level. Catabolism of gibberellins (GAs) plays a central role in plant development. In vitro, converts GA1, GA20, and GA29 to the corresponding 2-beta-hydroxylated products GA8, GA29-catabolite, respectively. In Oryza sativa subsp. japonica (Rice), this protein is Gibberellin 2-beta-dioxygenase 3.